The following is a 147-amino-acid chain: Transcriptional regulator FurA (147 aa).

The tract at residues 1–85 is DNA-binding; sequence MSSIPDYAEQ…GSVARYESRV (85 aa). Residues H34 and E82 each coordinate Zn(2+). The interval 86-147 is dimerization; that stretch reads GDNHHHIVCR…SISDTSRSHP (62 aa). Fe cation contacts are provided by D87 and H89. Residues H91, C94, C97, and D102 each contribute to the Zn(2+) site. E109 is a Fe cation binding site.

Belongs to the Fur family. As to quaternary structure, homodimer.

The protein resides in the cytoplasm. Its function is as follows. Represses transcription of the catalase-peroxidase gene katG and its own transcription by binding to the promoter region in a redox-dependent manner. The chain is Transcriptional regulator FurA (furA) from Mycobacterium bovis (strain ATCC BAA-935 / AF2122/97).